Here is a 901-residue protein sequence, read N- to C-terminus: Cyanophycin synthetase (901 aa).

One can recognise an ATP-grasp domain in the interval 224-478; that stretch reads KRILAASGVP…VAGAVMDMLF (255 aa). Position 493–499 (493–499) interacts with ATP; it reads GTNGKTT.

This sequence in the C-terminal section; belongs to the MurCDEF family. Homodimer.

It catalyses the reaction [L-4-(L-arginin-2-N-yl)aspartate](n) + L-aspartate + ATP = [L-4-(L-arginin-2-N-yl)aspartate](n)-L-aspartate + ADP + phosphate + H(+). It carries out the reaction [L-4-(L-arginin-2-N-yl)aspartate](n)-L-aspartate + L-arginine + ATP = [L-4-(L-arginin-2-N-yl)aspartate](n+1) + ADP + phosphate + H(+). In terms of biological role, catalyzes the ATP-dependent polymerization of arginine and aspartate to multi-L-arginyl-poly-L-aspartic acid (cyanophycin; a water-insoluble reserve polymer). This chain is Cyanophycin synthetase (cphA), found in Trichormus variabilis (strain ATCC 29413 / PCC 7937) (Anabaena variabilis).